The primary structure comprises 93 residues: Chaperone NapD (93 aa).

Belongs to the NapD family. As to quaternary structure, interacts with the cytoplasmic NapA precursor.

The protein localises to the cytoplasm. Functionally, chaperone for NapA, the catalytic subunit of the periplasmic nitrate reductase. It binds directly and specifically to the twin-arginine signal peptide of NapA, preventing premature interaction with the Tat translocase and premature export. This is Chaperone NapD from Haemophilus influenzae (strain ATCC 51907 / DSM 11121 / KW20 / Rd).